The primary structure comprises 469 residues: Ribulose bisphosphate carboxylase large chain (469 aa).

A propeptide spanning residues 1–2 is cleaved from the precursor; sequence MS. Pro-3 carries the post-translational modification N-acetylproline. Residue Lys-14 is modified to N6,N6,N6-trimethyllysine. Substrate is bound by residues Asn-123 and Thr-173. Lys-175 functions as the Proton acceptor in the catalytic mechanism. Lys-177 contributes to the substrate binding site. Positions 201, 203, and 204 each coordinate Mg(2+). Lys-201 carries the post-translational modification N6-carboxylysine. The active-site Proton acceptor is the His-294. Residues Arg-295, His-327, and Ser-379 each contribute to the substrate site.

This sequence belongs to the RuBisCO large chain family. Type I subfamily. Heterohexadecamer of 8 large chains and 8 small chains; disulfide-linked. The disulfide link is formed within the large subunit homodimers. Requires Mg(2+) as cofactor. The disulfide bond which can form in the large chain dimeric partners within the hexadecamer appears to be associated with oxidative stress and protein turnover.

It localises to the plastid. The protein resides in the chloroplast. It catalyses the reaction 2 (2R)-3-phosphoglycerate + 2 H(+) = D-ribulose 1,5-bisphosphate + CO2 + H2O. It carries out the reaction D-ribulose 1,5-bisphosphate + O2 = 2-phosphoglycolate + (2R)-3-phosphoglycerate + 2 H(+). In terms of biological role, ruBisCO catalyzes two reactions: the carboxylation of D-ribulose 1,5-bisphosphate, the primary event in carbon dioxide fixation, as well as the oxidative fragmentation of the pentose substrate in the photorespiration process. Both reactions occur simultaneously and in competition at the same active site. This chain is Ribulose bisphosphate carboxylase large chain, found in Brexia madagascariensis.